We begin with the raw amino-acid sequence, 123 residues long: Large ribosomal subunit protein uL29 (123 aa).

At Lys-19 the chain carries N6-acetyllysine. A Glycyl lysine isopeptide (Lys-Gly) (interchain with G-Cter in SUMO2) cross-link involves residue Lys-25. Ser-29 is subject to Phosphoserine. The residue at position 43 (Lys-43) is an N6-acetyllysine. The interval 95–114 is disordered; the sequence is LNKHEENLKTKKQQRKERLY.

Belongs to the universal ribosomal protein uL29 family. Component of the large ribosomal subunit.

The protein resides in the cytoplasm. In terms of biological role, component of the large ribosomal subunit. The ribosome is a large ribonucleoprotein complex responsible for the synthesis of proteins in the cell. The protein is Large ribosomal subunit protein uL29 (RPL35) of Bos taurus (Bovine).